The sequence spans 376 residues: Probable dual-specificity RNA methyltransferase RlmN (376 aa).

Glu96 (proton acceptor) is an active-site residue. Residues Tyr102–Glu346 form the Radical SAM core domain. A disulfide bridge links Cys109 with Cys351. Residues Cys116, Cys120, and Cys123 each coordinate [4Fe-4S] cluster. S-adenosyl-L-methionine contacts are provided by residues Gly171–Glu172, Ser203, Ser226–His228, and Asn308. Cys351 (S-methylcysteine intermediate) is an active-site residue.

It belongs to the radical SAM superfamily. RlmN family. [4Fe-4S] cluster is required as a cofactor.

The protein localises to the cytoplasm. The enzyme catalyses adenosine(2503) in 23S rRNA + 2 reduced [2Fe-2S]-[ferredoxin] + 2 S-adenosyl-L-methionine = 2-methyladenosine(2503) in 23S rRNA + 5'-deoxyadenosine + L-methionine + 2 oxidized [2Fe-2S]-[ferredoxin] + S-adenosyl-L-homocysteine. It catalyses the reaction adenosine(37) in tRNA + 2 reduced [2Fe-2S]-[ferredoxin] + 2 S-adenosyl-L-methionine = 2-methyladenosine(37) in tRNA + 5'-deoxyadenosine + L-methionine + 2 oxidized [2Fe-2S]-[ferredoxin] + S-adenosyl-L-homocysteine. Its function is as follows. Specifically methylates position 2 of adenine 2503 in 23S rRNA and position 2 of adenine 37 in tRNAs. The chain is Probable dual-specificity RNA methyltransferase RlmN from Chloroflexus aurantiacus (strain ATCC 29366 / DSM 635 / J-10-fl).